A 528-amino-acid chain; its full sequence is Sulfhydryl oxidase 1 (528 aa).

The first 19 residues, 1–19 (MSLIHLFLLLGLLSLEAAA), serve as a signal peptide directing secretion. The Thioredoxin domain occupies 35 to 170 (NVADQKDNAI…LLNWINKQIG (136 aa)). Residue Asn47 is glycosylated (N-linked (GlcNAc...) asparagine). Active-site nucleophile residues include Cys72 and Cys75. Cys72 and Cys75 are oxidised to a cystine. Asn186 and Asn297 each carry an N-linked (GlcNAc...) asparagine glycan. An intrachain disulfide couples Cys292 to Cys304. An ERV/ALR sulfhydryl oxidase domain is found at 295 to 397 (SKNETRGFSC…GDPKFPKMIW (103 aa)). Residues Arg300, Trp307, His311, Asp341, His345, 368 to 375 (WSTHNKVN), Lys394, and Trp397 contribute to the FAD site. Cys339 and Cys342 are joined by a disulfide. A disulfide bond links Cys403 and Cys406.

Requires FAD as cofactor. In terms of tissue distribution, highly expressed in roots.

Its subcellular location is the secreted. The protein resides in the cell wall. It catalyses the reaction 2 R'C(R)SH + O2 = R'C(R)S-S(R)CR' + H2O2. In terms of biological role, sulfhydryl oxidase involved in the regulation of cation homeostasis. Positively regulates shoot accumulation of K(+) and inhibits accumulation of toxic cations. Acts at the level of root K(+) efflux systems involved in xylem loading (root symplast-xylem interface). This chain is Sulfhydryl oxidase 1 (QSOX1), found in Arabidopsis thaliana (Mouse-ear cress).